The primary structure comprises 345 residues: MVTGEENVYLKSSLSILKELSLDELLNVQYDVTTLIAKRVQALQNRNKCVLEEPNSKLAEILCHEKNAPQQSSQTSAGPGEQDSEDFILTQFDEDIKKESAEVHYRNENKHTVQLPLVTMPPNRHKRKISEFSSPLNGLNNLSDLEDCSDTVIHEKDNDKENKTRKLLGIELENPESTSPNLYKNVKDNFLFDFNTNPLTKRAWILEDFRPNEDIAPVKRGRRKLERFYAQVGKPEDSKHRSLSVVIESQNSDYEFAFDNLRNRSKSPPGFGRLDFPSTQEGNEDKKKSQEIIRRKTKYRFLMASNNKIPPYEREYVFKREQLNQIVDDGCFFWSDKLLQIYARC.

A DNA-binding region spans residues 21-172 (SLDELLNVQY…KTRKLLGIEL (152 aa)). Ser143 carries the post-translational modification Phosphoserine. The disordered stretch occupies residues 265–290 (SKSPPGFGRLDFPSTQEGNEDKKKSQ). Ser267 is subject to Phosphoserine; by CDC28.

This sequence belongs to the COM1/SAE2/CtIP family. Dimer or multimer. Interacts with MRE11. Post-translationally, phosphorylated forms accumulate periodically during the unperturbed cell cycle and in response to DNA damage in G2. Phosphorylated by MEC1 and TEL1. Mutagenesis experiments showed that several of the 5 residues located in canonical (S/T)Q motifs, which are favored for phosphorylation by ATM/ATR kinases (Ser-73, Thr-90, Ser-249, Thr-279 and Ser-289) may be phosphorylated. Phosphorylated at Ser-267 by CDC28 which is required to initiate meiotic DSB resection by allowing SPO11 removal from DSB ends.

Its subcellular location is the cytoplasm. It localises to the nucleus. Its function is as follows. Endonuclease that cooperates with the MRX complex in processing meiotic and mitotic double-strand breaks by allowing the endonucleolytic removal of SPO11 from the break sites and ensuring both resection and intrachromosomal association of the broken ends. Required for proper recovery from checkpoint-mediated cell cycle arrest after DNA damage. MRX complex and SAE2 remove a small oligonucleotide(s) from the DNA ends to form an early intermediate which is rapidly processed by EXO1 and/or SGS1 to generate extensive tracts of single-stranded DNA that serve as substrate for RAD51. Plays a transitional role in the dissociation of MRE11 from, and the recruitment of RAD52 to, repair foci. Ensures that both ends of a DSB participate in a recombination event and impairs the formation of palindromic structures in the genome. With TEL1, promotes microhomology-mediated end joining (MMEJ) but inhibits non-homologous end joining (NHEJ), likely by regulating MRE11-dependent ssDNA accumulation at DNA break. SAE2 and MRX are particularly important for removal of hairpins, bulky adducts and other irregular end structures. Facilitates telomere length reequilibration and subsequent checkpoint switch off. Involved in homing efficiency of VMA1 intein VDE and in repair of transposon excision sites. The sequence is that of DNA endonuclease SAE2 (SAE2) from Saccharomyces cerevisiae (strain ATCC 204508 / S288c) (Baker's yeast).